Consider the following 396-residue polypeptide: Transcription factor E2FC (396 aa).

Positions 34–48 (PRYSSLTPSSTNRPF) are enriched in polar residues. A disordered region spans residues 34-57 (PRYSSLTPSSTNRPFSVSQSLPNS). A DNA-binding region spans residues 155 to 220 (RYDSSLGLLT…TTKNHIRWKG (66 aa)). Residues 226–268 (QKDLGDQISRLKSEVESMQSEESRLDDLIRERQEALRSLEEDD) adopt a coiled-coil conformation. The interval 236-264 (LKSEVESMQSEESRLDDLIRERQEALRSL) is leucine-zipper. A retinoblastoma protein binding region spans residues 376-391 (DYWFESDAEVSLTDLW).

The protein belongs to the E2F/DP family. As to quaternary structure, heterodimer with DP proteins. Interacts preferentially with DPB, but also with DPA. No interaction with DPB when phosphorylated. Interacts with SKP2A, CDKA-1 and maize retinoblastoma-related protein RBR1. Component of a DREAM-like complex which modulates a variety of developmentally regulated genes and of the mitotic genes in proliferating and differentiated cells. Interacts with MYB3R3 at later stages of leaves development. In terms of processing, phosphorylated by cyclin-dependent kinase. Phosphorylation is necessary to target E2FC for proteolysis. As to expression, expressed in meristematic areas, vascular tissues, apical part of the roots, cotyledons, upper region of the hypocotyls, trichomes, young flower buds and pollen grains.

The protein localises to the cytoplasm. In terms of biological role, involved in transcriptional repression. May act by repressing E2F-regulated genes in mature differentiated cells, but is not an antagonist of E2FA. Restricts cell division and is involved in the coordination between cell proliferation and endoreduplication during development. May play a role during the transition from skotomorphogenesis to photomorphogenesis. Regulated by phosphorylation-dependent proteolysis via the protein-ubiquitin ligase SCF(SKP2A) complex. This chain is Transcription factor E2FC (E2FC), found in Arabidopsis thaliana (Mouse-ear cress).